The sequence spans 479 residues: ATP synthase subunit beta (479 aa).

168–175 (GGAGVGKT) lines the ATP pocket.

Belongs to the ATPase alpha/beta chains family. As to quaternary structure, F-type ATPases have 2 components, CF(1) - the catalytic core - and CF(0) - the membrane proton channel. CF(1) has five subunits: alpha(3), beta(3), gamma(1), delta(1), epsilon(1). CF(0) has three main subunits: a(1), b(2) and c(9-12). The alpha and beta chains form an alternating ring which encloses part of the gamma chain. CF(1) is attached to CF(0) by a central stalk formed by the gamma and epsilon chains, while a peripheral stalk is formed by the delta and b chains.

It is found in the cell membrane. The enzyme catalyses ATP + H2O + 4 H(+)(in) = ADP + phosphate + 5 H(+)(out). Its function is as follows. Produces ATP from ADP in the presence of a proton gradient across the membrane. The catalytic sites are hosted primarily by the beta subunits. The protein is ATP synthase subunit beta of Frankia casuarinae (strain DSM 45818 / CECT 9043 / HFP020203 / CcI3).